The sequence spans 893 residues: Alanine--tRNA ligase (893 aa).

Zn(2+) contacts are provided by His-574, His-578, Cys-678, and His-682.

The protein belongs to the class-II aminoacyl-tRNA synthetase family. Requires Zn(2+) as cofactor.

It is found in the cytoplasm. It catalyses the reaction tRNA(Ala) + L-alanine + ATP = L-alanyl-tRNA(Ala) + AMP + diphosphate. Catalyzes the attachment of alanine to tRNA(Ala) in a two-step reaction: alanine is first activated by ATP to form Ala-AMP and then transferred to the acceptor end of tRNA(Ala). Also edits incorrectly charged Ser-tRNA(Ala) and Gly-tRNA(Ala) via its editing domain. This Bifidobacterium longum (strain NCC 2705) protein is Alanine--tRNA ligase.